The sequence spans 1290 residues: Nonribosomal peptide synthetase 6 (1290 aa).

Positions 1-27 (MTAIDVPWLSTPRRDNSHGTRSNSSCQ) are disordered. Positions 260–657 (SYQELDCQAS…AQVEHHLRSC (398 aa)) are adenylation. A Carrier domain is found at 775–851 (APETELERKL…GLAQTHRHPV (77 aa)). The residue at position 812 (Ser-812) is an O-(pantetheine 4'-phosphoryl)serine. The tract at residues 846 to 870 (THRHPVRRAEVPRSSHDPDPFGRVR) is disordered. Residues 852–870 (RRAEVPRSSHDPDPFGRVR) are compositionally biased toward basic and acidic residues. The interval 914-1162 (GGQLDPEQLR…PCMNIIPVRV (249 aa)) is condensation.

It belongs to the NRP synthetase family.

Nonribosomal peptide synthesis (NRPS) is a key mechanism responsible for the biosynthesis of bioactive metabolites which are potentially contributing to organismal virulence. In Aspergillus fumigatus (strain ATCC MYA-4609 / CBS 101355 / FGSC A1100 / Af293) (Neosartorya fumigata), this protein is Nonribosomal peptide synthetase 6 (NRPS6).